The following is a 530-amino-acid chain: MEPRAVADALETGEEDAVTEALRSFNREHSQSFTFDDAQQEDRKRLAKLLVSVLEQGLSPKHRVTWLQTIRILSRDRSCLDSFASRQSLHALACYADIAISEEPIPQPPDMDVLLESLKCLCNLVLSSPTAQMLAAEARLVVRLAERVGLYRKRSYPHEVQFFDLRLLFLLTALRTDVRQQLFQELHGVRLLTDALELTLGVAPKENPLVILPAQETERAMEILKVLFNITYDSVKREVDEEDAALYRYLGTLLRHCVMADAAGDRTEEFHGHTVNLLGNLPLKCLDVLLALELHEGSLEFMGVNMDVINALLAFLEKRLHQTHRLKECVAPVLSVLTECARMHRPARKFLKAQVLPPLRDVRTRPEVGDLLRNKLVRLMTHLDTDVKRVAAEFLFVLCSESVPRFIKYTGYGNAAGLLAARGLMAGGRPEGQYSEDEDTDTEEYREAKASINPVTGRVEEKPPNPMEGMTEEQKEHEAMKLVNMFDKLSRHRLIQPMGMSPRGHLTSLQDAMCETMEGQLSSDPDSDPD.

Residue S435 is modified to Phosphoserine; by CK2. A Phosphothreonine; by CK2 modification is found at T440. The residue at position 442 (T442) is a Phosphothreonine. 4 positions are modified to phosphoserine: S501, S522, S523, and S527.

The protein belongs to the synembryn family. In terms of assembly, interacts with GDP-bound G alpha proteins GNAI1, GNAO1 and GNAQ, and with GNA13 with lower affinity. Does not interact with G-alpha proteins when they are in complex with subunits beta and gamma. Interacts (via C-terminus) with RGS14; the interaction stimulates the dissociation of the complex between RGS14 and the active GTP-bound form of GNAI1. Interacts with NCS1; interaction is favored in the absence of Ca(2+) and myristoylation of NCS1 is not required. Post-translationally, phosphorylated at Ser-435 and Thr-440 by CK2, stabilizing its interface with G alpha proteins.

It is found in the cytoplasm. The protein resides in the cell cortex. In terms of biological role, chaperone that specifically binds and folds nascent G alpha proteins prior to G protein heterotrimer formation, promoting their stability and activity: folds GNAI1, GNAO1, GNA13 and GNAQ. Does not fold G(s) G-alpha proteins GNAS nor GNAL. Also acts as a guanine nucleotide exchange factor (GEF) for G alpha proteins by stimulating exchange of bound GDP for free GTP. Involved in regulation of microtubule pulling forces during mitotic movement of chromosomes by stimulating G(i)-alpha protein (GNAI1), possibly leading to release G(i)-alpha-GTP and NuMA proteins from the NuMA-GPSM2-G(i)-alpha-GDP complex. Also acts as an activator for G(q)-alpha (GNAQ) protein by enhancing the G(q)-coupled receptor-mediated ERK activation. The protein is Chaperone Ric-8A of Rattus norvegicus (Rat).